Consider the following 631-residue polypeptide: Probable ATP-dependent RNA helicase DDX53 (631 aa).

The 62-residue stretch at 48-109 (EPPLCFKIKN…EMKAKAKAAI (62 aa)) folds into the KH domain. A Q motif motif is present at residues 222 to 250 (RFKDAFQQYPDLLKSIIRVGIVKPTPIQS). Residues K244, Q249, 268 to 273 (TGTGKT), and H311 contribute to the ATP site. The Helicase ATP-binding domain maps to 253–428 (WPIILQGIDL…LSYLKDPMIV (176 aa)). Residues 376–379 (DEAD) carry the DEAD box motif. The 162-residue stretch at 440-601 (TVKQNIIVTT…SVPEDLVVMA (162 aa)) folds into the Helicase C-terminal domain.

This sequence belongs to the DEAD box helicase family. In terms of tissue distribution, expressed in testis. Wide expression in various cancer tissues and cancer cell lines.

It localises to the nucleus. The catalysed reaction is ATP + H2O = ADP + phosphate + H(+). This chain is Probable ATP-dependent RNA helicase DDX53 (DDX53), found in Homo sapiens (Human).